Reading from the N-terminus, the 317-residue chain is Ferrochelatase (317 aa).

Fe cation is bound by residues histidine 184 and glutamate 259.

This sequence belongs to the ferrochelatase family.

It localises to the cytoplasm. The enzyme catalyses heme b + 2 H(+) = protoporphyrin IX + Fe(2+). Its pathway is porphyrin-containing compound metabolism; protoheme biosynthesis; protoheme from protoporphyrin-IX: step 1/1. Its function is as follows. Catalyzes the ferrous insertion into protoporphyrin IX. This Chlamydia muridarum (strain MoPn / Nigg) protein is Ferrochelatase.